Here is a 142-residue protein sequence, read N- to C-terminus: Large ribosomal subunit protein uL11 (142 aa).

The protein belongs to the universal ribosomal protein uL11 family. In terms of assembly, part of the ribosomal stalk of the 50S ribosomal subunit. Interacts with L10 and the large rRNA to form the base of the stalk. L10 forms an elongated spine to which L12 dimers bind in a sequential fashion forming a multimeric L10(L12)X complex. One or more lysine residues are methylated.

In terms of biological role, forms part of the ribosomal stalk which helps the ribosome interact with GTP-bound translation factors. The protein is Large ribosomal subunit protein uL11 of Alcanivorax borkumensis (strain ATCC 700651 / DSM 11573 / NCIMB 13689 / SK2).